The primary structure comprises 425 residues: MSEDNNNGKEYILDADSELRFEIEQKDAKVFVTLISGFAELFGTELVKKKKYEFGIGAKVAIFTYQGCVLQVTGKMDVCYISKETPMIQYINCHAALEQFRTDAEEHDKRGPVILVVGPMDVGKSTLCRILLNYAVRVGRRPLYADLDVGQGAISIPGNIATILIERPASVEEGFAKTAPLVYHFGHKSPSGNSVLYNAVVSKMAEVTLQSLDANKRTKSSGIIVNTCGWVKGYGYKHLLHAARAYRARAIFVLDQERLYNDLLRDVPSNVHVVLLPKSGGVVERTKELRHESREQRIKEYFYGNMRTPFYPFSFEVKFQDLRLYKIGAPPLPDSCMPIGMKAEDNKKKVVAVTPTSSLLHHILTLSFAESTDENVIGTNVAGFCCVTEVDMERQSVMLLSPQPRPLPPNALLLWSELQFMDNHA.

ATP contacts are provided by residues E18, K59, and 121–126 (DVGKST).

It belongs to the Clp1 family. Clp1 subfamily.

It localises to the nucleus. In terms of biological role, required for endonucleolytic cleavage during polyadenylation-dependent pre-mRNA 3'-end formation. The sequence is that of Protein CLP1 homolog (cbc) from Drosophila mojavensis (Fruit fly).